Consider the following 138-residue polypeptide: Acidic phospholipase A2 2 (138 aa).

Residues 1–16 (MRTLWIVAVWLTGVEG) form the signal peptide. Intrachain disulfides connect C42/C131, C44/C60, C59/C111, C65/C138, C66/C104, C73/C97, and C91/C102. Ca(2+)-binding residues include Y43, G45, and G47. H63 is a catalytic residue. Ca(2+) is bound at residue D64. Residue D105 is part of the active site.

As to quaternary structure, monomer. Requires Ca(2+) as cofactor. As to expression, expressed by the venom gland.

Its subcellular location is the secreted. It catalyses the reaction a 1,2-diacyl-sn-glycero-3-phosphocholine + H2O = a 1-acyl-sn-glycero-3-phosphocholine + a fatty acid + H(+). Its function is as follows. Snake venom phospholipase that inhibits ADP- and collagen-induced human platelet aggregation. This inhibition is completely inhibited by abolition of catalytic activity in case of collagen as inducer and partially inhibited in case of ADP as inducer. PLA2 catalyzes the calcium-dependent hydrolysis of the 2-acyl groups in 3-sn-phosphoglycerides. The sequence is that of Acidic phospholipase A2 2 from Macrovipera lebetinus (Levantine viper).